We begin with the raw amino-acid sequence, 476 residues long: Glutamate--tRNA ligase 1 (476 aa).

The short motif at 9 to 19 (PSPTGFLHIGG) is the 'HIGH' region element. Positions 238-242 (KLSKR) match the 'KMSKS' region motif. ATP is bound at residue lysine 241.

It belongs to the class-I aminoacyl-tRNA synthetase family. Glutamate--tRNA ligase type 1 subfamily. In terms of assembly, monomer.

The protein resides in the cytoplasm. It catalyses the reaction tRNA(Glu) + L-glutamate + ATP = L-glutamyl-tRNA(Glu) + AMP + diphosphate. In terms of biological role, catalyzes the attachment of glutamate to tRNA(Glu) in a two-step reaction: glutamate is first activated by ATP to form Glu-AMP and then transferred to the acceptor end of tRNA(Glu). The protein is Glutamate--tRNA ligase 1 of Bartonella bacilliformis (strain ATCC 35685 / KC583 / Herrer 020/F12,63).